Consider the following 471-residue polypeptide: dTDP-4-dehydro-6-deoxy-alpha-D-glucopyranose 2,3-dehydratase (471 aa).

DTDP-4-dehydro-6-deoxy-alpha-D-glucose-binding positions include Trp67, 155 to 159 (TRSNY), Ser193, Asn238, Trp288, Arg351, 367 to 369 (QCT), 372 to 373 (NY), and 405 to 408 (EGGR).

Belongs to the hexose 2,3-dehydratase family. In terms of assembly, homodimer.

It catalyses the reaction dTDP-4-dehydro-6-deoxy-alpha-D-glucose = dTDP-3,4-didehydro-2,6-dideoxy-alpha-D-glucose + H2O. It participates in antibiotic biosynthesis. Its function is as follows. Involved in the biosynthesis of the 2,3,6-trideoxysugar L-epivancosamine, the terminal sugar added to the aglycone scaffold of chloroeremomycin, a member of the glycopeptide antibiotics vancomycin family. Catalyzes the removal of the hydroxyl group at position C-2 of the hexose ring of dTDP-4-dehydro-6-deoxy-alpha-D-glucopyranose, and the oxidation of the hydroxyl group at position C-3 to form a carbonyl functionality. The product of the reaction, dTDP-2,6-dideoxy-D-glycero-hex-2-enos-4-ulose, is a highly unstable diketosugar, which spontaneously forms dTDP-3,4-didehydro-2,6-dideoxy-alpha-D-glucose. This is dTDP-4-dehydro-6-deoxy-alpha-D-glucopyranose 2,3-dehydratase from Amycolatopsis orientalis (Nocardia orientalis).